The primary structure comprises 32 residues: Photosystem I reaction center subunit XII (32 aa).

Residues valine 9–threonine 28 traverse the membrane as a helical segment.

This sequence belongs to the PsaM family.

It localises to the cellular thylakoid membrane. The sequence is that of Photosystem I reaction center subunit XII from Nostoc sp. (strain PCC 7120 / SAG 25.82 / UTEX 2576).